Consider the following 218-residue polypeptide: Large ribosomal subunit protein eL14 (218 aa).

N6-acetyllysine is present on K79. K85 carries the N6-acetyllysine; alternate modification. K85 is modified (N6-succinyllysine; alternate). Residue K124 forms a Glycyl lysine isopeptide (Lys-Gly) (interchain with G-Cter in SUMO2) linkage. S139 is subject to Phosphoserine. The tract at residues 159-218 (VPAKKATAAGKKAAAQKAPAQKAPAQKAAGQKAAQPPKAQKGQKPPAQKAPAPKASGKKA) is disordered. 6 consecutive repeat copies span residues 174-178 (QKAPA), 179-183 (QKAPA), 184-188 (QKAAG), 189-193 (QKAAQ), 196-198 (KAQ), and 199-201 (KGQ). The tract at residues 174-193 (QKAPAQKAPAQKAAGQKAAQ) is 4 X 5 AA tandem repeats of Q-K-A-[PAS]-X. The segment at 196 to 201 (KAQKGQ) is 2 X 3 AA tandem repeats of K-[GA]-Q. N6-succinyllysine is present on K207.

This sequence belongs to the eukaryotic ribosomal protein eL14 family. In terms of assembly, component of the large ribosomal subunit.

Its subcellular location is the cytoplasm. Component of the large ribosomal subunit. The ribosome is a large ribonucleoprotein complex responsible for the synthesis of proteins in the cell. The sequence is that of Large ribosomal subunit protein eL14 (RPL14) from Oryctolagus cuniculus (Rabbit).